A 419-amino-acid chain; its full sequence is UDP-N-acetylglucosamine 1-carboxyvinyltransferase (419 aa).

22-23 (KN) provides a ligand contact to phosphoenolpyruvate. Arginine 93 lines the UDP-N-acetyl-alpha-D-glucosamine pocket. The Proton donor role is filled by cysteine 117. Cysteine 117 carries the post-translational modification 2-(S-cysteinyl)pyruvic acid O-phosphothioketal. Aspartate 307 and isoleucine 329 together coordinate UDP-N-acetyl-alpha-D-glucosamine.

This sequence belongs to the EPSP synthase family. MurA subfamily.

It localises to the cytoplasm. It carries out the reaction phosphoenolpyruvate + UDP-N-acetyl-alpha-D-glucosamine = UDP-N-acetyl-3-O-(1-carboxyvinyl)-alpha-D-glucosamine + phosphate. It participates in cell wall biogenesis; peptidoglycan biosynthesis. Functionally, cell wall formation. Adds enolpyruvyl to UDP-N-acetylglucosamine. The sequence is that of UDP-N-acetylglucosamine 1-carboxyvinyltransferase from Shewanella sediminis (strain HAW-EB3).